The chain runs to 286 residues: ATP synthase gamma chain (286 aa).

It belongs to the ATPase gamma chain family. As to quaternary structure, F-type ATPases have 2 components, CF(1) - the catalytic core - and CF(0) - the membrane proton channel. CF(1) has five subunits: alpha(3), beta(3), gamma(1), delta(1), epsilon(1). CF(0) has three main subunits: a, b and c.

It localises to the cell inner membrane. Produces ATP from ADP in the presence of a proton gradient across the membrane. The gamma chain is believed to be important in regulating ATPase activity and the flow of protons through the CF(0) complex. This chain is ATP synthase gamma chain, found in Shewanella pealeana (strain ATCC 700345 / ANG-SQ1).